The following is a 234-amino-acid chain: tRNA1(Val) (adenine(37)-N6)-methyltransferase (234 aa).

Belongs to the methyltransferase superfamily. tRNA (adenine-N(6)-)-methyltransferase family.

The protein resides in the cytoplasm. It carries out the reaction adenosine(37) in tRNA1(Val) + S-adenosyl-L-methionine = N(6)-methyladenosine(37) in tRNA1(Val) + S-adenosyl-L-homocysteine + H(+). Its function is as follows. Specifically methylates the adenine in position 37 of tRNA(1)(Val) (anticodon cmo5UAC). The protein is tRNA1(Val) (adenine(37)-N6)-methyltransferase of Flavobacterium psychrophilum (strain ATCC 49511 / DSM 21280 / CIP 103535 / JIP02/86).